Here is a 435-residue protein sequence, read N- to C-terminus: Serine--tRNA ligase (435 aa).

242–244 (TAE) contributes to the L-serine binding site. Residue 273–275 (RSE) coordinates ATP. Glutamate 296 contacts L-serine. 360–363 (EISS) is a binding site for ATP. L-serine is bound at residue serine 396.

Belongs to the class-II aminoacyl-tRNA synthetase family. Type-1 seryl-tRNA synthetase subfamily. Homodimer. The tRNA molecule binds across the dimer.

The protein localises to the cytoplasm. It catalyses the reaction tRNA(Ser) + L-serine + ATP = L-seryl-tRNA(Ser) + AMP + diphosphate + H(+). It carries out the reaction tRNA(Sec) + L-serine + ATP = L-seryl-tRNA(Sec) + AMP + diphosphate + H(+). It participates in aminoacyl-tRNA biosynthesis; selenocysteinyl-tRNA(Sec) biosynthesis; L-seryl-tRNA(Sec) from L-serine and tRNA(Sec): step 1/1. Catalyzes the attachment of serine to tRNA(Ser). Is also able to aminoacylate tRNA(Sec) with serine, to form the misacylated tRNA L-seryl-tRNA(Sec), which will be further converted into selenocysteinyl-tRNA(Sec). The sequence is that of Serine--tRNA ligase from Vibrio vulnificus (strain YJ016).